A 257-amino-acid polypeptide reads, in one-letter code: uncharacterized protein (257 aa).

Disordered regions lie at residues 1–164 (MERS…AGAC) and 225–257 (TAWS…RARA). A compositionally biased stretch (basic and acidic residues) spans 10-28 (CGEEPRSGSRRLPKAEGDK). Residues 54-65 (RPNRASGRRRRS) are compositionally biased toward basic residues. The span at 125 to 139 (RPTPRPCAGPAPPPA) shows a compositional bias: pro residues. Basic residues predominate over residues 144–162 (RCRRPRRWPRAGRRGRRAG).

This is an uncharacterized protein from Homo sapiens (Human).